Consider the following 238-residue polypeptide: Survival of motor neuron-related-splicing factor 30 (238 aa).

Positions 72 to 132 constitute a Tudor domain; the sequence is SWKVGDKCMA…KPVEEGRKAK (61 aa). The Nuclear localization signal motif lies at 142 to 160; sequence KKEMIAQQREYKKKKALKK. A Phosphoserine modification is found at Ser-201. Lys-219 carries the post-translational modification N6-acetyllysine.

It belongs to the SMN family. As to quaternary structure, associates with spliceosomes. Associates with U4/U5/U6 tri-snRNP and with U2 snRNP.

Its subcellular location is the nucleus speckle. It is found in the nucleus. The protein localises to the cajal body. Involved in spliceosome assembly. The chain is Survival of motor neuron-related-splicing factor 30 (SMNDC1) from Bos taurus (Bovine).